The sequence spans 226 residues: Protein-L-isoaspartate O-methyltransferase (226 aa).

The active site involves S75.

The protein belongs to the methyltransferase superfamily. L-isoaspartyl/D-aspartyl protein methyltransferase family.

The protein resides in the cytoplasm. It catalyses the reaction [protein]-L-isoaspartate + S-adenosyl-L-methionine = [protein]-L-isoaspartate alpha-methyl ester + S-adenosyl-L-homocysteine. Its function is as follows. Catalyzes the methyl esterification of L-isoaspartyl residues in peptides and proteins that result from spontaneous decomposition of normal L-aspartyl and L-asparaginyl residues. It plays a role in the repair and/or degradation of damaged proteins. This is Protein-L-isoaspartate O-methyltransferase from Lawsonia intracellularis (strain PHE/MN1-00).